The following is a 504-amino-acid chain: Calcium/calmodulin-dependent protein kinase type II (504 aa).

The Protein kinase domain occupies 65–351 (YQLIENLGDG…IHQFFQHPWI (287 aa)). Residues 71–79 (LGDGAFSQV) and Lys-94 each bind ATP. Asp-188 functions as the Proton acceptor in the catalytic mechanism. A Phosphothreonine modification is found at Thr-252.

This sequence belongs to the protein kinase superfamily. CAMK Ser/Thr protein kinase family. CaMK subfamily. In terms of assembly, interacts with sty1. It depends on Mg(2+) as a cofactor. In terms of processing, autophosphorylated.

The protein localises to the cytoplasm. Its subcellular location is the barrier septum. The protein resides in the forespore membrane. It localises to the ascus epiplasm. The catalysed reaction is L-seryl-[protein] + ATP = O-phospho-L-seryl-[protein] + ADP + H(+). The enzyme catalyses L-threonyl-[protein] + ATP = O-phospho-L-threonyl-[protein] + ADP + H(+). In terms of biological role, has a role in the regulation of G2/M transition during the mitotic cell cycle. The polypeptide is Calcium/calmodulin-dependent protein kinase type II (Schizosaccharomyces pombe (strain 972 / ATCC 24843) (Fission yeast)).